A 999-amino-acid polypeptide reads, in one-letter code: Bifunctional glutamine synthetase adenylyltransferase/adenylyl-removing enzyme (999 aa).

Positions 1 to 483 (MTPGRRSSTF…LHEKLFYRPL (483 aa)) are adenylyl removase. Residues 489–999 (QLAPGEARLS…RTVVEDLFYA (511 aa)) form an adenylyl transferase region.

Belongs to the GlnE family. Requires Mg(2+) as cofactor.

It carries out the reaction [glutamine synthetase]-O(4)-(5'-adenylyl)-L-tyrosine + phosphate = [glutamine synthetase]-L-tyrosine + ADP. It catalyses the reaction [glutamine synthetase]-L-tyrosine + ATP = [glutamine synthetase]-O(4)-(5'-adenylyl)-L-tyrosine + diphosphate. Adenylation and deadenylation of glutamate--ammonia ligase. Its function is as follows. Involved in the regulation of glutamine synthetase GlnA, a key enzyme in the process to assimilate ammonia. When cellular nitrogen levels are high, the C-terminal adenylyl transferase (AT) inactivates GlnA by covalent transfer of an adenylyl group from ATP to specific tyrosine residue of GlnA, thus reducing its activity. Conversely, when nitrogen levels are low, the N-terminal adenylyl removase (AR) activates GlnA by removing the adenylyl group by phosphorolysis, increasing its activity. The regulatory region of GlnE binds the signal transduction protein PII (GlnB) which indicates the nitrogen status of the cell. This Streptomyces coelicolor (strain ATCC BAA-471 / A3(2) / M145) protein is Bifunctional glutamine synthetase adenylyltransferase/adenylyl-removing enzyme.